Consider the following 147-residue polypeptide: Organic hydroperoxide resistance transcriptional regulator (147 aa).

The HTH marR-type domain occupies 11-141 (ENQLCFLLYA…LKSALYTLLE (131 aa)). Cysteine 15 carries the cysteine sulfenic acid (-SOH); alternate modification. Cysteine 15 carries the S-bacillithiol cysteine disulfide; alternate modification. The residue at position 15 (cysteine 15) is an S-cysteinyl cysteine; alternate. The n,N-(cysteine-1,S-diyl)phenylalanine (Cys-Phe); alternate cross-link spans 15-16 (CF). A DNA-binding region (H-T-H motif) is located at residues 57-80 (VKKMGEQLYLDSGTLTPMLKRMEQ).

Homodimer. In terms of processing, cys-15 is oxidized by organic peroxides to cysteine sulfenic acid (Cys-SOH). This can react with the alpha-amido of the following residue to form the sulfenamide cross-link. Oxidation or cross-linking results in the loss of DNA-binding activity and the inactivation of repressor function. Both the cysteine sulfenic acid and the sulfenamide cross-link can react with free cysteine or bacillithiol (BSH) to form mixed disulfides. Further reduction of OhrR by free sulfhydryl compounds restores repressor activity.

It localises to the cytoplasm. With respect to regulation, inactivated by oxidation of Cys-15 to a sulfenic acid. Its function is as follows. Organic peroxide sensor. Represses the expression of the peroxide-inducible gene ohrA by cooperative binding to two inverted repeat elements. In Bacillus subtilis (strain 168), this protein is Organic hydroperoxide resistance transcriptional regulator (ohrR).